Here is a 209-residue protein sequence, read N- to C-terminus: COP9 signalosome complex subunit 8 (209 aa).

The PCI domain maps to E8–F179. S175 carries the post-translational modification Phosphoserine.

Belongs to the CSN8 family. As to quaternary structure, component of the CSN complex, composed of COPS1/GPS1, COPS2, COPS3, COPS4, COPS5, COPS6, COPS7 (COPS7A or COPS7B), COPS8 and COPS9. In the complex, it probably interacts directly with COPS3, COPS4 and COPS7 (COPS7A or COPS7B).

The protein localises to the cytoplasm. Its subcellular location is the nucleus. Component of the COP9 signalosome complex (CSN), a complex involved in various cellular and developmental processes. The CSN complex is an essential regulator of the ubiquitin (Ubl) conjugation pathway by mediating the deneddylation of the cullin subunits of SCF-type E3 ligase complexes, leading to decrease the Ubl ligase activity of SCF-type complexes such as SCF, CSA or DDB2. The complex is also involved in phosphorylation of p53/TP53, c-jun/JUN, IkappaBalpha/NFKBIA, ITPK1 and IRF8/ICSBP, possibly via its association with CK2 and PKD kinases. CSN-dependent phosphorylation of TP53 and JUN promotes and protects degradation by the Ubl system, respectively. This is COP9 signalosome complex subunit 8 (COPS8) from Pongo abelii (Sumatran orangutan).